A 507-amino-acid chain; its full sequence is GMP synthase [glutamine-hydrolyzing] (507 aa).

Residues 9-202 (TILIIDFGSQ…VHRIVGVKPG (194 aa)) form the Glutamine amidotransferase type-1 domain. Residue Cys-86 is the Nucleophile of the active site. Residues His-176 and Glu-178 contribute to the active site. A GMPS ATP-PPase domain is found at 203–395 (WTMGAYREQA…LGLPDSFIGR (193 aa)). 230–236 (SGGVDSS) lines the ATP pocket.

In terms of assembly, homodimer.

The catalysed reaction is XMP + L-glutamine + ATP + H2O = GMP + L-glutamate + AMP + diphosphate + 2 H(+). It participates in purine metabolism; GMP biosynthesis; GMP from XMP (L-Gln route): step 1/1. Its function is as follows. Catalyzes the synthesis of GMP from XMP. In Brucella melitensis biotype 1 (strain ATCC 23456 / CCUG 17765 / NCTC 10094 / 16M), this protein is GMP synthase [glutamine-hydrolyzing].